Consider the following 199-residue polypeptide: MSDRLVHLAANLEKVLGKRVQSIEIALGEVTVVVNADTYFESAMLMRDDPSLAFEQLIDLCGVDYQDFRDGAWNGQRFGVVSHLLSLEHNWRLRVRVFAPDDSYPLVASITPVWSSANWFEREAFDLYGIIFEGHEDLRRILTDYGFIGHPFRKDFPISGNVEMRYDPELKRVVYQPVTIEAREITPRIVREEQYGDPV.

It belongs to the complex I 30 kDa subunit family. In terms of assembly, NDH-1 is composed of 14 different subunits. Subunits NuoB, C, D, E, F, and G constitute the peripheral sector of the complex.

The protein resides in the cell membrane. The catalysed reaction is a quinone + NADH + 5 H(+)(in) = a quinol + NAD(+) + 4 H(+)(out). In terms of biological role, NDH-1 shuttles electrons from NADH, via FMN and iron-sulfur (Fe-S) centers, to quinones in the respiratory chain. The immediate electron acceptor for the enzyme in this species is believed to be ubiquinone. Couples the redox reaction to proton translocation (for every two electrons transferred, four hydrogen ions are translocated across the cytoplasmic membrane), and thus conserves the redox energy in a proton gradient. This chain is NADH-quinone oxidoreductase subunit C, found in Polynucleobacter asymbioticus (strain DSM 18221 / CIP 109841 / QLW-P1DMWA-1) (Polynucleobacter necessarius subsp. asymbioticus).